We begin with the raw amino-acid sequence, 226 residues long: uncharacterized protein (226 aa).

This is an uncharacterized protein from Haemophilus influenzae (strain ATCC 51907 / DSM 11121 / KW20 / Rd).